The sequence spans 353 residues: 41 kDa protein (353 aa).

The segment at 132–197 (QSSHASALEQ…DNNSSDTIKD (66 aa)) is disordered. Positions 157-169 (LDNKGKSDSENCN) are enriched in basic and acidic residues.

In Lactobacillus helveticus (Lactobacillus suntoryeus), this protein is 41 kDa protein.